We begin with the raw amino-acid sequence, 218 residues long: Protein-methionine-sulfoxide reductase heme-binding subunit MsrQ (218 aa).

Helical transmembrane passes span 14–34 (AVHA…WQVW), 60–80 (LLLI…AVLI), 86–106 (LGLY…WLDL), 121–141 (PYIT…ITST), and 155–175 (LHML…WLVK).

Belongs to the MsrQ family. In terms of assembly, heterodimer of a catalytic subunit (MsrP) and a heme-binding subunit (MsrQ). FMN serves as cofactor. Heme b is required as a cofactor.

It is found in the cell inner membrane. Its function is as follows. Part of the MsrPQ system that repairs oxidized periplasmic proteins containing methionine sulfoxide residues (Met-O), using respiratory chain electrons. Thus protects these proteins from oxidative-stress damage caused by reactive species of oxygen and chlorine generated by the host defense mechanisms. MsrPQ is essential for the maintenance of envelope integrity under bleach stress, rescuing a wide series of structurally unrelated periplasmic proteins from methionine oxidation. MsrQ provides electrons for reduction to the reductase catalytic subunit MsrP, using the quinone pool of the respiratory chain. The sequence is that of Protein-methionine-sulfoxide reductase heme-binding subunit MsrQ from Xanthomonas campestris pv. campestris (strain B100).